The chain runs to 397 residues: Teichoic acid D-alanine hydrolase (397 aa).

The signal sequence occupies residues 1–23 (MKFNKVKLVIHACVLLFIIISIA).

Its subcellular location is the cell membrane. It catalyses the reaction [(4-D-Ala)-(2-GlcNAc)-Rib-ol-P]n-[Gro-P]m-beta-D-ManNAc-(1-&gt;4)-alpha-D-GlcNAc-P-peptidoglycan + n H2O = [(2-GlcNAc)-Rib-ol-P]n-[Gro-P]m-beta-D-ManNAc-(1-&gt;4)-alpha-D-GlcNAc-P-peptidoglycan + n D-alanine.. Functionally, catalyzes the liberation of D-alanyl moieties present on wall teichoic acid (WTA) and lipoteichoic acid (LTA). Affects the methicillin resistance level and autolysis in the presence of Triton X-100 as well as the cell wall structure. The sequence is that of Teichoic acid D-alanine hydrolase (fmtA) from Staphylococcus aureus (strain NCTC 8325 / PS 47).